Here is a 206-residue protein sequence, read N- to C-terminus: Large ribosomal subunit protein eL13z (206 aa).

The segment at 185-206 (TNKRHAGARAKRAAEAEKEEKK) is disordered. Residues 186 to 195 (NKRHAGARAK) are compositionally biased toward basic residues. The span at 196–206 (RAAEAEKEEKK) shows a compositional bias: basic and acidic residues.

The protein belongs to the eukaryotic ribosomal protein eL13 family.

It is found in the cytoplasm. This is Large ribosomal subunit protein eL13z (RPL13B) from Arabidopsis thaliana (Mouse-ear cress).